Here is a 422-residue protein sequence, read N- to C-terminus: Tyrosine--tRNA ligase (422 aa).

An L-tyrosine-binding site is contributed by Tyr36. Residues Pro41–His50 carry the 'HIGH' region motif. Residues Tyr174 and Gln178 each contribute to the L-tyrosine site. The 'KMSKS' region motif lies at Lys234 to Thr238. Lys237 contributes to the ATP binding site. The 65-residue stretch at Thr356–Trp420 folds into the S4 RNA-binding domain.

The protein belongs to the class-I aminoacyl-tRNA synthetase family. TyrS type 1 subfamily. Homodimer.

The protein resides in the cytoplasm. It catalyses the reaction tRNA(Tyr) + L-tyrosine + ATP = L-tyrosyl-tRNA(Tyr) + AMP + diphosphate + H(+). Its function is as follows. Catalyzes the attachment of tyrosine to tRNA(Tyr) in a two-step reaction: tyrosine is first activated by ATP to form Tyr-AMP and then transferred to the acceptor end of tRNA(Tyr). The protein is Tyrosine--tRNA ligase of Aeromonas hydrophila subsp. hydrophila (strain ATCC 7966 / DSM 30187 / BCRC 13018 / CCUG 14551 / JCM 1027 / KCTC 2358 / NCIMB 9240 / NCTC 8049).